The following is a 118-amino-acid chain: MKAISPVRSMSSCYQAVCCLSEQSLSIARGSSHKGPGVDEPMGLLYDMNGCYSKLKELVPGIPQGSKLSQVEILQHVIDYIFDLQIVLGEDQQQNSILNLQKSDFSELATQGDASVCH.

One can recognise a bHLH domain in the interval serine 32 to leucine 84.

As to quaternary structure, homodimer. Heterodimer with other HLH proteins. Interacts (via HLH domain) with the bHLH protein hes4/hairy2 (via Orange domain). Interacts with stat3.

It is found in the nucleus. Its function is as follows. Transcriptional regulator (lacking a basic DNA binding domain) which negatively regulates the basic helix-loop-helix (bHLH) transcription factors by forming heterodimers and inhibiting their DNA binding and transcriptional activity. Influences cell fate decisions in the embryo by sequestering and blocking the activity of the bHLH transcription factors that control these decisions. Inhibits the binding of myogenic bHLH-containing complexes to E-box DNA, thereby preventing activation of muscle-specific target genes. Also inhibits the activity of neurogenic factor neurod1/neuroD. Plays a role in cell cycle progression and survival of neural crest progenitors; binding to either hes4-B/hairy2b or stat3 blocks the formation of transcription factor complexes and the repressor function of hes4-B/hairy2B, to allow neural crest progenitors to differentiate. May play a role in the regulation of the circadian rhythm. In Xenopus tropicalis (Western clawed frog), this protein is DNA-binding protein inhibitor ID-3 (id3).